The primary structure comprises 339 residues: Ketol-acid reductoisomerase (NADP(+)) (339 aa).

The KARI N-terminal Rossmann domain maps to 1-182 (MRVYYDRDAD…GGGRSGIIET (182 aa)). NADP(+) is bound by residues 24–27 (YGSQ), lysine 48, serine 51, threonine 53, and 83–86 (DELQ). Histidine 108 is a catalytic residue. Residue glycine 134 participates in NADP(+) binding. The region spanning 183 to 328 (NFREECETDL…AKLRGMMPWI (146 aa)) is the KARI C-terminal knotted domain. Residues aspartate 191, glutamate 195, glutamate 227, and glutamate 231 each coordinate Mg(2+). A substrate-binding site is contributed by serine 252.

This sequence belongs to the ketol-acid reductoisomerase family. It depends on Mg(2+) as a cofactor.

The enzyme catalyses (2R)-2,3-dihydroxy-3-methylbutanoate + NADP(+) = (2S)-2-acetolactate + NADPH + H(+). The catalysed reaction is (2R,3R)-2,3-dihydroxy-3-methylpentanoate + NADP(+) = (S)-2-ethyl-2-hydroxy-3-oxobutanoate + NADPH + H(+). Its pathway is amino-acid biosynthesis; L-isoleucine biosynthesis; L-isoleucine from 2-oxobutanoate: step 2/4. It participates in amino-acid biosynthesis; L-valine biosynthesis; L-valine from pyruvate: step 2/4. In terms of biological role, involved in the biosynthesis of branched-chain amino acids (BCAA). Catalyzes an alkyl-migration followed by a ketol-acid reduction of (S)-2-acetolactate (S2AL) to yield (R)-2,3-dihydroxy-isovalerate. In the isomerase reaction, S2AL is rearranged via a Mg-dependent methyl migration to produce 3-hydroxy-3-methyl-2-ketobutyrate (HMKB). In the reductase reaction, this 2-ketoacid undergoes a metal-dependent reduction by NADPH to yield (R)-2,3-dihydroxy-isovalerate. This chain is Ketol-acid reductoisomerase (NADP(+)), found in Rhizobium etli (strain ATCC 51251 / DSM 11541 / JCM 21823 / NBRC 15573 / CFN 42).